We begin with the raw amino-acid sequence, 54 residues long: Large ribosomal subunit protein bL33 (54 aa).

The protein belongs to the bacterial ribosomal protein bL33 family.

This chain is Large ribosomal subunit protein bL33, found in Petrotoga mobilis (strain DSM 10674 / SJ95).